A 236-amino-acid polypeptide reads, in one-letter code: Phosphoribosylaminoimidazole-succinocarboxamide synthase (236 aa).

The protein belongs to the SAICAR synthetase family.

It carries out the reaction 5-amino-1-(5-phospho-D-ribosyl)imidazole-4-carboxylate + L-aspartate + ATP = (2S)-2-[5-amino-1-(5-phospho-beta-D-ribosyl)imidazole-4-carboxamido]succinate + ADP + phosphate + 2 H(+). Its pathway is purine metabolism; IMP biosynthesis via de novo pathway; 5-amino-1-(5-phospho-D-ribosyl)imidazole-4-carboxamide from 5-amino-1-(5-phospho-D-ribosyl)imidazole-4-carboxylate: step 1/2. This chain is Phosphoribosylaminoimidazole-succinocarboxamide synthase, found in Pseudomonas putida (strain ATCC 700007 / DSM 6899 / JCM 31910 / BCRC 17059 / LMG 24140 / F1).